The sequence spans 275 residues: tRNA uridine(34) hydroxylase (275 aa).

A Rhodanese domain is found at 121–214 (SQPDVLVIDT…YLEKTYNKNG (94 aa)). Catalysis depends on C174, which acts as the Cysteine persulfide intermediate.

This sequence belongs to the TrhO family.

It carries out the reaction uridine(34) in tRNA + AH2 + O2 = 5-hydroxyuridine(34) in tRNA + A + H2O. Its function is as follows. Catalyzes oxygen-dependent 5-hydroxyuridine (ho5U) modification at position 34 in tRNAs. This chain is tRNA uridine(34) hydroxylase, found in Wolbachia pipientis wMel.